The sequence spans 539 residues: Chaperonin GroEL (539 aa).

Residues 29–32 (TLGP), 86–90 (DGTTT), Gly-413, and Asp-492 each bind ATP.

This sequence belongs to the chaperonin (HSP60) family. In terms of assembly, forms a cylinder of 14 subunits composed of two heptameric rings stacked back-to-back. Interacts with the co-chaperonin GroES.

It is found in the cytoplasm. It catalyses the reaction ATP + H2O + a folded polypeptide = ADP + phosphate + an unfolded polypeptide.. In terms of biological role, together with its co-chaperonin GroES, plays an essential role in assisting protein folding. The GroEL-GroES system forms a nano-cage that allows encapsulation of the non-native substrate proteins and provides a physical environment optimized to promote and accelerate protein folding. The chain is Chaperonin GroEL from Fusobacterium nucleatum subsp. polymorphum (Fusobacterium polymorphum).